A 925-amino-acid chain; its full sequence is Probable glycoprotein hormone G-protein coupled receptor (925 aa).

A signal peptide spans 1–27 (MEDRGICPRVLQVLFLVVLILISPVYA). Residues 28–529 (AKNDACTKCS…EDIMGYVWLT (502 aa)) lie on the Extracellular side of the membrane. Residue Asn-61 is glycosylated (N-linked (GlcNAc...) asparagine). LRR repeat units follow at residues 85–106 (KLKY…RVKN), 110–131 (SLIT…AFDD), 134–155 (QLTQ…NKTS), 156–180 (SVTK…GNLP), 181–202 (SLEN…IFRQ), 203–224 (NTRL…NEDA), 230–250 (SLKT…RGLK), and 251–273 (NLHF…DSIR). N-linked (GlcNAc...) asparagine glycosylation occurs at Asn-152. Residue Asn-212 is glycosylated (N-linked (GlcNAc...) asparagine). The interval 299–493 (TMQKPSTEEN…PTLIPHSNHT (195 aa)) is disordered. Over residues 301–318 (QKPSTEENNGQTTASSPT) the composition is skewed to polar residues. Residues 333–349 (STQPHTTSGFGGGGFPG) form a 1; truncated repeat. Residues 333–461 (STQPHTTSGF…PGGGGFPGGG (129 aa)) form a 5 X approximate tandem repeats region. The segment covering 341-362 (GFGGGGFPGGGGGFPGGGGFPA) has biased composition (gly residues). 3 consecutive repeat copies span residues 350–384 (GGGG…GFPG), 385–419 (GGGG…GFPG), and 420–453 (GGGG…GFPG). The span at 365-375 (SKTSTQPHTTS) shows a compositional bias: polar residues. The span at 376–397 (GFGGGGFPGGGGGFPGGGGFPA) shows a compositional bias: gly residues. Residues 400–410 (SKTSTQPHTTS) are compositionally biased toward polar residues. Gly residues predominate over residues 411–432 (GFGGGGFPGGGGGFPGGGGFPG). A compositionally biased stretch (polar residues) spans 434–445 (SNTSTQPHTTSN). Residue Asn-435 is glycosylated (N-linked (GlcNAc...) asparagine). Positions 446–462 (SGGGGFPGGGGFPGGGT) are enriched in gly residues. The stretch at 454 to 461 (GGGFPGGG) is one 5; truncated repeat. Positions 476 to 493 (VHQSTADPPTLIPHSNHT) are enriched in polar residues. Asn-495 carries an N-linked (GlcNAc...) asparagine glycan. The helical transmembrane segment at 530 to 551 (VVSFMVGAVALVANLVVALVLL) threads the bilayer. Residues 552–561 (TSQRRLNVTR) are Cytoplasmic-facing. A helical membrane pass occupies residues 562 to 584 (FLMCNLAFADFILGLYIFILTSV). Residues 585–606 (SAVTRGDYHNYVQQWQNGAGCK) are Extracellular-facing. A helical membrane pass occupies residues 607–628 (ILGFLAVFSSELSLFTLVMMTI). Topologically, residues 629–651 (ERFYAIVHAMHMNARLSFRKTVR) are cytoplasmic. Residues 652 to 673 (FMIGGWIFALVMAVVPLTGVSG) form a helical membrane-spanning segment. Topologically, residues 674–691 (YSKVAICLPFDVSDATST) are extracellular. A helical membrane pass occupies residues 692–712 (AYVAFLLLVNGASFISVMYLY). At 713-739 (SRMLYVVVSGGDMEGAPKRNDSKVAKR) the chain is on the cytoplasmic side. The chain crosses the membrane as a helical span at residues 740–763 (MAILVFTDMLCWAPIAFFGLLAAF). Residues 764-774 (GQTLLTVTQSK) lie on the Extracellular side of the membrane. A helical transmembrane segment spans residues 775–795 (ILLVFFFPINSICNPFLYAFF). Over 796–925 (TKAFKRELFT…QKQKILQSPS (130 aa)) the chain is Cytoplasmic. Residues 904-925 (VTKSSSPPHLKLQKQKILQSPS) are disordered.

This sequence belongs to the G-protein coupled receptor 1 family. FSH/LSH/TSH subfamily.

It is found in the cell membrane. In terms of biological role, probable receptor for a glycoprotein hormone. The protein is Probable glycoprotein hormone G-protein coupled receptor of Anthopleura elegantissima (Green aggregating anemone).